The sequence spans 185 residues: Ribosome-recycling factor (185 aa).

This sequence belongs to the RRF family.

It is found in the cytoplasm. Its function is as follows. Responsible for the release of ribosomes from messenger RNA at the termination of protein biosynthesis. May increase the efficiency of translation by recycling ribosomes from one round of translation to another. This Salinispora arenicola (strain CNS-205) protein is Ribosome-recycling factor.